Consider the following 663-residue polypeptide: UvrABC system protein B (663 aa).

Positions 1–10 (MIDKRDDKPF) are enriched in basic and acidic residues. Positions 1-23 (MIDKRDDKPFKLKSKYKPSGDQP) are disordered. The Helicase ATP-binding domain occupies 31–418 (DNIEGGEKAQ…TNTIIEQIIR (388 aa)). Position 44 to 51 (44 to 51 (GATGTGKT)) interacts with ATP. Residues 97–120 (YYDYYQPEAYVPSSDTYIEKDSSV) carry the Beta-hairpin motif. The Helicase C-terminal domain occupies 435–601 (QMDDLLGEIN…TIKKDIRGLI (167 aa)). The UVR domain maps to 627–662 (KEAINALQKQMQEAAELLDFELAAQMRDLILELKLM).

The protein belongs to the UvrB family. As to quaternary structure, forms a heterotetramer with UvrA during the search for lesions. Interacts with UvrC in an incision complex.

It localises to the cytoplasm. Functionally, the UvrABC repair system catalyzes the recognition and processing of DNA lesions. A damage recognition complex composed of 2 UvrA and 2 UvrB subunits scans DNA for abnormalities. Upon binding of the UvrA(2)B(2) complex to a putative damaged site, the DNA wraps around one UvrB monomer. DNA wrap is dependent on ATP binding by UvrB and probably causes local melting of the DNA helix, facilitating insertion of UvrB beta-hairpin between the DNA strands. Then UvrB probes one DNA strand for the presence of a lesion. If a lesion is found the UvrA subunits dissociate and the UvrB-DNA preincision complex is formed. This complex is subsequently bound by UvrC and the second UvrB is released. If no lesion is found, the DNA wraps around the other UvrB subunit that will check the other stand for damage. The chain is UvrABC system protein B from Streptococcus pyogenes serotype M6 (strain ATCC BAA-946 / MGAS10394).